A 307-amino-acid chain; its full sequence is 4-hydroxy-tetrahydrodipicolinate synthase (307 aa).

Residue Thr-57 participates in pyruvate binding. The Proton donor/acceptor role is filled by Tyr-145. Lys-173 acts as the Schiff-base intermediate with substrate in catalysis. Val-215 lines the pyruvate pocket.

Belongs to the DapA family. Homotetramer; dimer of dimers.

The protein localises to the cytoplasm. The enzyme catalyses L-aspartate 4-semialdehyde + pyruvate = (2S,4S)-4-hydroxy-2,3,4,5-tetrahydrodipicolinate + H2O + H(+). Its pathway is amino-acid biosynthesis; L-lysine biosynthesis via DAP pathway; (S)-tetrahydrodipicolinate from L-aspartate: step 3/4. Its function is as follows. Catalyzes the condensation of (S)-aspartate-beta-semialdehyde [(S)-ASA] and pyruvate to 4-hydroxy-tetrahydrodipicolinate (HTPA). In Leptospira interrogans serogroup Icterohaemorrhagiae serovar copenhageni (strain Fiocruz L1-130), this protein is 4-hydroxy-tetrahydrodipicolinate synthase.